The primary structure comprises 264 residues: 4-oxalocrotonate decarboxylase (264 aa).

This sequence belongs to the hydratase/decarboxylase family.

The catalysed reaction is (3E)-2-oxohex-3-enedioate + H(+) = 2-oxopent-4-enoate + CO2. Its pathway is aromatic compound metabolism; benzoate degradation via hydroxylation. The polypeptide is 4-oxalocrotonate decarboxylase (dmpH) (Pseudomonas sp. (strain CF600)).